The sequence spans 259 residues: O-antigen export system permease protein RfbA (259 aa).

A run of 6 helical transmembrane segments spans residues 33 to 53 (FGYL…YFIF), 73 to 95 (FPWQ…NAQI), 111 to 131 (VMME…FLFV), 142 to 162 (WGIP…SIIF), 176 to 196 (VSLG…SDMI), and 228 to 248 (EYIS…LAIF). The ABC transmembrane type-2 domain maps to 33–251 (FGYLWSIANP…IVGLAIFNKL (219 aa)).

This sequence belongs to the ABC-2 integral membrane protein family.

The protein localises to the cell inner membrane. In terms of biological role, may form an ATP-driven O-antigen export apparatus, in association with RfbB. The sequence is that of O-antigen export system permease protein RfbA (rfbA) from Klebsiella pneumoniae.